An 85-amino-acid chain; its full sequence is Toxin BmKa1 (85 aa).

Residues 1–19 (MNYLVFFSLALLLMTGVGS) form the signal peptide. Positions 21–83 (RDGYIADDKN…VPIRVPGKCN (63 aa)) constitute an LCN-type CS-alpha/beta domain. 4 disulfide bridges follow: Cys-31–Cys-82, Cys-35–Cys-55, Cys-41–Cys-65, and Cys-45–Cys-67.

The protein belongs to the long (4 C-C) scorpion toxin superfamily. Sodium channel inhibitor family. Alpha subfamily. In terms of tissue distribution, expressed by the venom gland.

Its subcellular location is the secreted. Its function is as follows. Alpha toxins bind voltage-independently at site-3 of sodium channels (Nav) and inhibit the inactivation of the activated channels, thereby blocking neuronal transmission. This Olivierus martensii (Manchurian scorpion) protein is Toxin BmKa1.